The following is a 358-amino-acid chain: MSKYWNDKVREIEPYVPGEQPKDRKYIKLNTNENPYPPSDKVLEAMRNAVNGDLKLYPDPTCSELTSEIANYYKLDENEIFIGNGSDEILAFSFMTFFSKNKKILFPDISYTFYKVYAELFDLNYELVKLDDNFDIPLEELKKTNGGVIIPNPNAPTGKYINTESLKSLIEANKDRVVIIDEAYIDFGGQSMVKYMHEYDNLLVIQTLSKSRSLAGLRVGFALGHKDLIEGLNRIKNSINSYTIDRVALAGAKAAIQDSKYFEEITKKIVKTREKVVKELEKLDFRVLKSESNFVFASHNNASGKFIYENLKCQGILVRYFDKERIDNFLRITIGTNEEMDILIEKLRFILSNNQKEL.

At K210 the chain carries N6-(pyridoxal phosphate)lysine.

It belongs to the class-II pyridoxal-phosphate-dependent aminotransferase family. Histidinol-phosphate aminotransferase subfamily. Homodimer. Pyridoxal 5'-phosphate is required as a cofactor.

It carries out the reaction L-histidinol phosphate + 2-oxoglutarate = 3-(imidazol-4-yl)-2-oxopropyl phosphate + L-glutamate. The protein operates within amino-acid biosynthesis; L-histidine biosynthesis; L-histidine from 5-phospho-alpha-D-ribose 1-diphosphate: step 7/9. The chain is Histidinol-phosphate aminotransferase from Clostridium beijerinckii (strain ATCC 51743 / NCIMB 8052) (Clostridium acetobutylicum).